A 378-amino-acid polypeptide reads, in one-letter code: Succinyl-diaminopimelate desuccinylase (378 aa).

His-68 provides a ligand contact to Zn(2+). Asp-70 is an active-site residue. Asp-102 is a binding site for Zn(2+). Glu-136 functions as the Proton acceptor in the catalytic mechanism. Glu-137, Glu-165, and His-351 together coordinate Zn(2+).

Belongs to the peptidase M20A family. DapE subfamily. Homodimer. Requires Zn(2+) as cofactor. Co(2+) is required as a cofactor.

The catalysed reaction is N-succinyl-(2S,6S)-2,6-diaminopimelate + H2O = (2S,6S)-2,6-diaminopimelate + succinate. The protein operates within amino-acid biosynthesis; L-lysine biosynthesis via DAP pathway; LL-2,6-diaminopimelate from (S)-tetrahydrodipicolinate (succinylase route): step 3/3. Functionally, catalyzes the hydrolysis of N-succinyl-L,L-diaminopimelic acid (SDAP), forming succinate and LL-2,6-diaminopimelate (DAP), an intermediate involved in the bacterial biosynthesis of lysine and meso-diaminopimelic acid, an essential component of bacterial cell walls. The polypeptide is Succinyl-diaminopimelate desuccinylase (Pseudomonas syringae pv. syringae).